We begin with the raw amino-acid sequence, 174 residues long: Adenylate kinase (174 aa).

The tract at residues 12-41 (STGDMLRAAIKAGTPLGLEAKKIIDEGGLV) is NMP. AMP contacts are provided by residues Thr13, Arg18, 39–41 (GLV), 67–70 (GFPR), and Gln74. An LID region spans residues 104-141 (GRRVHLASGRTYHVTYNPPKVEGKDDVTGEDLIQRDDD). Residues Arg105 and 114–115 (TY) each bind ATP. AMP contacts are provided by Arg138 and Arg149.

It belongs to the adenylate kinase family. As to quaternary structure, monomer.

It localises to the cytoplasm. The enzyme catalyses AMP + ATP = 2 ADP. It participates in purine metabolism; AMP biosynthesis via salvage pathway; AMP from ADP: step 1/1. In terms of biological role, catalyzes the reversible transfer of the terminal phosphate group between ATP and AMP. Plays an important role in cellular energy homeostasis and in adenine nucleotide metabolism. In Neisseria lactamica, this protein is Adenylate kinase.